A 405-amino-acid chain; its full sequence is 4-hydroxy-3-methylbut-2-en-1-yl diphosphate synthase (ferredoxin) (405 aa).

Positions 314, 317, 348, and 355 each coordinate [4Fe-4S] cluster.

Belongs to the IspG family. [4Fe-4S] cluster serves as cofactor.

The catalysed reaction is (2E)-4-hydroxy-3-methylbut-2-enyl diphosphate + 2 oxidized [2Fe-2S]-[ferredoxin] + H2O = 2-C-methyl-D-erythritol 2,4-cyclic diphosphate + 2 reduced [2Fe-2S]-[ferredoxin] + H(+). It functions in the pathway isoprenoid biosynthesis; isopentenyl diphosphate biosynthesis via DXP pathway; isopentenyl diphosphate from 1-deoxy-D-xylulose 5-phosphate: step 5/6. Converts 2C-methyl-D-erythritol 2,4-cyclodiphosphate (ME-2,4cPP) into 1-hydroxy-2-methyl-2-(E)-butenyl 4-diphosphate. The sequence is that of 4-hydroxy-3-methylbut-2-en-1-yl diphosphate synthase (ferredoxin) from Prochlorococcus marinus subsp. pastoris (strain CCMP1986 / NIES-2087 / MED4).